The sequence spans 119 residues: Beta-2-microglobulin (119 aa).

Residues 1–20 form the signal peptide; the sequence is MARFVVVPLLVLVSLFGLEA. The Ig-like C1-type domain occupies 25-114; the sequence is PKIQVYSRYP…VTFSTPKTVK (90 aa). A disulfide bridge connects residues Cys45 and Cys100.

The protein belongs to the beta-2-microglobulin family. Heterodimer of an alpha chain and a beta chain. Beta-2-microglobulin is the beta-chain of major histocompatibility complex class I molecules.

The protein resides in the secreted. Functionally, component of the class I major histocompatibility complex (MHC). Involved in the presentation of peptide antigens to the immune system. The chain is Beta-2-microglobulin (B2M) from Saguinus oedipus (Cotton-top tamarin).